A 164-amino-acid polypeptide reads, in one-letter code: Dehydrin Rab16B (164 aa).

Residues 1 to 164 (MENYQGQHGY…KIKEKLPGQH (164 aa)) are disordered. Positions 25 to 53 (GQYGGGATAPGGGHGAMGMGGHAGAGAGG) are enriched in gly residues. Residues 107-117 (GNNQQQQQMMG) are compositionally biased toward low complexity. The segment covering 147 to 164 (GEKKGFMDKIKEKLPGQH) has biased composition (basic and acidic residues).

The protein belongs to the plant dehydrin family.

This is Dehydrin Rab16B (RAB16B) from Oryza sativa subsp. indica (Rice).